Consider the following 244-residue polypeptide: MKDFNYKLVLSYDGTNYYGFQKQLHLNTIQSVLENVLNKITKQKKIKIYGASRTDKGVHASGQVVHFQLPFLIPNDHFQKILNFCLPSDIQITKIILISKEFHCRFQAKSKIYHYVFSKKKLNVFNYRFQVYIPNMDFNKIKEAILFIEGKHDFSLFTSQKSLKNYQRIIFKAFIKETKQKYFLIIHGNSFIQHMIRFLVGFLIEIAQNKKTLSEFKQMLDLKINQKARLLAPAKGLILKKIFY.

D55 acts as the Nucleophile in catalysis. Y113 serves as a coordination point for substrate.

The protein belongs to the tRNA pseudouridine synthase TruA family. Homodimer.

It carries out the reaction uridine(38/39/40) in tRNA = pseudouridine(38/39/40) in tRNA. Formation of pseudouridine at positions 38, 39 and 40 in the anticodon stem and loop of transfer RNAs. The chain is tRNA pseudouridine synthase A from Phytoplasma mali (strain AT).